The sequence spans 771 residues: MAPGPFSSALLSPPPAALPFLLLLWAGASRGQPCPGRCICQNVAPTLTMLCAKTGLLFVPPAIDRRVVELRLTDNFIAAVRRRDFANMTSLVHLTLSRNTIGQVAAGAFADLRALRALHLDSNRLAEVRGDQLRGLGNLRHLILGNNQIRRVESAAFDAFLSTVEDLDLSYNNLEALPWEAVGQMVNLNTLTLDHNLIDHIAEGTFVQLHKLVRLDMTSNRLHKLPPDGLFLRSQGTGPKPPTPLTVSFGGNPLHCNCELLWLRRLTREDDLETCATPEHLTDRYFWSIPEEEFLCEPPLITRQAGGRALVVEGQAVSLRCRAVGDPEPVVHWVAPDGRLLGNSSRTRVRGDGTLDVTITTLRDSGTFTCIASNAAGEATAPVEVCVVPLPLMAPPPAAPPPLTEPGSSDIATPGRPGANDSAAERRLVAAELTSNSVLIRWPAQRPVPGIRMYQVQYNSSVDDSLVYRMIPSTSQTFLVNDLAAGRAYDLCVLAVYDDGATALPATRVVGCVQFTTAGDPAPCRPLRAHFLGGTMIIAIGGVIVASVLVFIVLLMIRYKVYGDGDSRRVKGSRSLPRVSHVCSQTNGAGTGAAQAPALPAQDHYEALREVESQAAPAVAVEAKAMEAETASAEPEVVLGRSLGGSATSLCLLPSEETSGEESRAAVGPRRSRSGALEPPTSAPPTLALVPGGAAARPRPQQRYSFDGDYGALFQSHSYPRRARRTKRHRSTPHLDGAGGGAAGEDGDLGLGSARACLAFTSTEWMLESTV.

Positions 1 to 31 are cleaved as a signal peptide; it reads MAPGPFSSALLSPPPAALPFLLLLWAGASRG. An LRRNT domain is found at 32-65; it reads QPCPGRCICQNVAPTLTMLCAKTGLLFVPPAIDR. The Extracellular portion of the chain corresponds to 32–536; the sequence is QPCPGRCICQ…LRAHFLGGTM (505 aa). LRR repeat units follow at residues 66–87, 90–111, 114–135, 138–159, 163–184, 187–208, and 211–232; these read RVVE…DFAN, SLVH…AFAD, ALRA…QLRG, NLRH…AFDA, TVED…AVGQ, NLNT…TFVQ, and KLVR…GLFL. A glycan (N-linked (GlcNAc...) asparagine) is linked at N87. The LRRCT domain maps to 252–298; that stretch reads NPLHCNCELLWLRRLTREDDLETCATPEHLTDRYFWSIPEEEFLCEP. Positions 299–386 constitute an Ig-like domain; it reads PLITRQAGGR…GEATAPVEVC (88 aa). A disulfide bond links C321 and C370. An N-linked (GlcNAc...) asparagine glycan is attached at N343. Residues 397–422 are disordered; sequence PAAPPPLTEPGSSDIATPGRPGANDS. The Fibronectin type-III domain maps to 424-520; that stretch reads AERRLVAAEL…GCVQFTTAGD (97 aa). A helical transmembrane segment spans residues 537–557; the sequence is IIAIGGVIVASVLVFIVLLMI. At 558 to 771 the chain is on the cytoplasmic side; sequence RYKVYGDGDS…STEWMLESTV (214 aa). Phosphoserine is present on residues S613 and S718. Residues 654 to 743 are disordered; the sequence is PSEETSGEES…HLDGAGGGAA (90 aa). The segment covering 719–732 has biased composition (basic residues); sequence YPRRARRTKRHRST. Positions 768–771 match the PDZ-binding motif; sequence ESTV.

Belongs to the LRFN family. Can form heteromeric complexes with LRFN2, LRFN3, LRFN4 and LRFN5. Forms homomeric complexes, but not across cell junctions. Interacts with DLG1, DLG2, DLG3 and DLG4. Interacts with 2 AMPA receptor subunits GRIA1 and GRIA2 and NMDA receptor subunit GRIN1. Post-translationally, glycosylated.

It localises to the membrane. The protein resides in the synapse. It is found in the postsynaptic density membrane. Its function is as follows. Promotes neurite outgrowth in hippocampal neurons. Involved in the regulation and maintenance of excitatory synapses. Induces the clustering of excitatory postsynaptic proteins, including DLG4, DLGAP1, GRIA1 and GRIN1. The polypeptide is Leucine-rich repeat and fibronectin type III domain-containing protein 1 (LRFN1) (Homo sapiens (Human)).